A 153-amino-acid polypeptide reads, in one-letter code: Membrane-spanning 4-domains subfamily A member 13 (153 aa).

4 helical membrane-spanning segments follow: residues 1-21 (MTGI…MGQI), 36-56 (GCSL…RATW), 71-91 (ILCM…LSTF), and 111-131 (VLLS…IFGC).

The protein belongs to the MS4A family.

The protein resides in the membrane. Its function is as follows. May be involved in signal transduction as a component of a multimeric receptor complex. This Bos taurus (Bovine) protein is Membrane-spanning 4-domains subfamily A member 13 (MS4A13).